The primary structure comprises 314 residues: tRNA dimethylallyltransferase (314 aa).

Residue 12–19 (GPTASGKT) coordinates ATP. 14-19 (TASGKT) contacts substrate. 3 interaction with substrate tRNA regions span residues 37 to 40 (DSAL), 161 to 165 (QRIQR), and 244 to 249 (RCVGYR).

Belongs to the IPP transferase family. Monomer. The cofactor is Mg(2+).

The enzyme catalyses adenosine(37) in tRNA + dimethylallyl diphosphate = N(6)-dimethylallyladenosine(37) in tRNA + diphosphate. In terms of biological role, catalyzes the transfer of a dimethylallyl group onto the adenine at position 37 in tRNAs that read codons beginning with uridine, leading to the formation of N6-(dimethylallyl)adenosine (i(6)A). The chain is tRNA dimethylallyltransferase from Janthinobacterium sp. (strain Marseille) (Minibacterium massiliensis).